The chain runs to 398 residues: Putative tyrosine-protein phosphatase C15H7.3 (398 aa).

A compositionally biased stretch (basic residues) spans 1 to 15 (MERSQKSARKKKKTS). Residues 1–114 (MERSQKSARK…EPWSEEEPAK (114 aa)) form a disordered region. Basic and acidic residues predominate over residues 18–40 (GNDRSIRSERKSKQKKPAGEKSQ). The span at 41–50 (KSRRTRKSRG) shows a compositional bias: basic residues. Polar residues predominate over residues 55–73 (GFTSRETIQPSSSGQSEGT). A compositionally biased stretch (basic and acidic residues) spans 74–114 (TRMDDQKDEKKDDKKEEKKEERKEEKKEEVKEPWSEEEPAK). Residues 125–376 (TNVGGTFKQT…GTVHRSMACW (252 aa)) form the Tyrosine-protein phosphatase domain.

The protein belongs to the protein-tyrosine phosphatase family. Non-receptor class subfamily.

It carries out the reaction O-phospho-L-tyrosyl-[protein] + H2O = L-tyrosyl-[protein] + phosphate. The chain is Putative tyrosine-protein phosphatase C15H7.3 from Caenorhabditis elegans.